Consider the following 253-residue polypeptide: Rab GTPase-activating protein 1-like, isoform 10 (253 aa).

The stretch at 8-222 forms a coiled coil; the sequence is SMTFEERENR…MNEIQAAKNS (215 aa). Residues 233–253 are disordered; that stretch reads TATGTQPLQPAPVTQPPKEST.

The polypeptide is Rab GTPase-activating protein 1-like, isoform 10 (RABGAP1L) (Homo sapiens (Human)).